The primary structure comprises 644 residues: Uromodulin (644 aa).

An N-terminal signal peptide occupies residues M1–N26. Residues E30–E66 enclose the EGF-like 1 domain. Intrachain disulfides connect C34/C43, C37/C52, C54/C65, C71/C84, C79/C93, C95/C107, C113/C127, C121/C136, C138/C149, C151/C162, C156/C173, C177/C270, C198/C285, C220/C258, C226/C290, C251/C259, C300/C309, C303/C318, C320/C350, C338/C428, and C369/C392. Residue N40 is glycosylated (N-linked (GlcNAc...) asparagine). In terms of domain architecture, EGF-like 2; calcium-binding spans D67–I108. N-linked (GlcNAc...) asparagine glycosylation occurs at N78. Positions D109 to E150 constitute an EGF-like 3; calcium-binding domain. Positions C151–Q174 are beta hairpin. The segment at D175–S294 is D10C. N235 carries N-linked (GlcNAc...) asparagine glycosylation. N278 carries N-linked (GlcNAc...) asparagine glycosylation. The 32-residue stretch at S295–V326 folds into the EGF-like 4 domain. N325 carries an N-linked (GlcNAc...) asparagine glycan. Residues E337–L432 are ZP-N. Positions E337–S592 constitute a ZP domain. N399 and N450 each carry an N-linked (GlcNAc...) asparagine glycan. A flexible ZP-N/ZP-C linker; important for secretion and polymerization into filaments region spans residues D433–T456. The segment at G457 to Q467 is internal hydrophobic patch (IHP). The ZP-C stretch occupies residues G457–S592. 3 disulfide bridges follow: C509–C569, C530–C585, and C574–C581. A glycan (N-linked (GlcNAc...) asparagine) is linked at N516. Positions R589–S592 are essential for cleavage by HPN. An external hydrophobic patch (EHP); regulates polymerization into filaments region spans residues V601 to R609. S615 is lipidated: GPI-anchor amidated serine. A propeptide spans V616–H644 (removed in mature form).

In terms of assembly, homodimer that then polymerizes into long filaments. The filaments can additionally assemble laterally to form a sheet. The filaments consist of a zigzag-shaped backbone with laterally protruding arms which interact with bacterial adhesin fimH. Two fimH molecules can bind to a single UMOD monomer. N-glycosylated. In terms of processing, proteolytically cleaved at a conserved C-terminal proteolytic cleavage site to generate the secreted form found in urine. This cleavage is catalyzed by HPN. In terms of tissue distribution, expression restricted to the thick ascending limb of the loop of Henle (TALH).

The protein resides in the apical cell membrane. It is found in the basolateral cell membrane. Its subcellular location is the cell projection. It localises to the cilium membrane. The protein localises to the secreted. In terms of biological role, functions in biogenesis and organization of the apical membrane of epithelial cells of the thick ascending limb of Henle's loop (TALH), where it promotes formation of complex filamentous gel-like structure that may play a role in the water barrier permeability. May serve as a receptor for binding and endocytosis of cytokines (IL-1, IL-2) and TNF. Facilitates neutrophil migration across renal epithelia. In the urine, may contribute to colloid osmotic pressure, retards passage of positively charged electrolytes, and inhibits formation of liquid containing supersaturated salts and subsequent formation of salt crystals. Protects against urinary tract infections by binding to type 1 fimbriated E.coli. Binds to bacterial adhesin fimH which mediates the stable formation of bacterial aggregates, prevents the binding of E.coli to uroplakins UPK1A and UPK1B which act as urothelial receptors for type I fimbriae, and allows for pathogen clearance through micturation. Also promotes aggregation of other bacteria including K.pneumoniae, P.aeruginosa and S.mitis and so may also protect against other uropathogens. The sequence is that of Uromodulin (Umod) from Rattus norvegicus (Rat).